The sequence spans 276 residues: Small ribosomal subunit protein uS2 (276 aa).

Residues 226-276 form a disordered region; that stretch reads KKAREERQLAAAREAAGEPKSEDAPAEAAATEEAPATEAPAAEAQQENAAE. Residues 251–276 are compositionally biased toward low complexity; sequence AEAAATEEAPATEAPAAEAQQENAAE.

The protein belongs to the universal ribosomal protein uS2 family.

In Corynebacterium efficiens (strain DSM 44549 / YS-314 / AJ 12310 / JCM 11189 / NBRC 100395), this protein is Small ribosomal subunit protein uS2.